The primary structure comprises 133 residues: ATP synthase epsilon chain (133 aa).

The protein belongs to the ATPase epsilon chain family. In terms of assembly, F-type ATPases have 2 components, CF(1) - the catalytic core - and CF(0) - the membrane proton channel. CF(1) has five subunits: alpha(3), beta(3), gamma(1), delta(1), epsilon(1). CF(0) has three main subunits: a, b and c.

The protein localises to the cell membrane. Produces ATP from ADP in the presence of a proton gradient across the membrane. This is ATP synthase epsilon chain (atpC) from Mycoplasma genitalium (strain ATCC 33530 / DSM 19775 / NCTC 10195 / G37) (Mycoplasmoides genitalium).